We begin with the raw amino-acid sequence, 671 residues long: Synaptotagmin-like protein 4 (671 aa).

The RabBD domain maps to 4-122 (LLDLSFLSEE…KATGDWFYDQ (119 aa)). The segment at 63–105 (CARCQESLGRLSPKTNTCRGCNHLVCRDCRIQESNGTWRCKVC) adopts an FYVE-type zinc-finger fold. A disordered region spans residues 199-243 (SESLDSFTADSDSTSRRDSLDKSGLFPEWKKMSAPKSQVEKETQP). A phosphoserine mark is found at Ser-201, Ser-204, Ser-217, Ser-221, Ser-274, and Ser-289. The 123-residue stretch at 356-478 (VTGRIAFSLK…KLDKKLDHCL (123 aa)) folds into the C2 1 domain. Ser-488 carries the phosphoserine modification. Residues 507–633 (PASKTPVGGD…ISNGEVVDWM (127 aa)) enclose the C2 2 domain.

In terms of assembly, part of a ternary complex containing STX1A and RAB27A. Can bind both dominant negative and dominant active mutants of RAB27A. Binds STXBP1, RAB3A, RAB8A and RAB27B. Interacts with MYO5A.

It is found in the membrane. It localises to the cell membrane. The protein localises to the cytoplasmic vesicle. The protein resides in the secretory vesicle membrane. Modulates exocytosis of dense-core granules and secretion of hormones in the pancreas and the pituitary. Interacts with vesicles containing negatively charged phospholipids in a Ca(2+)-independent manner. The polypeptide is Synaptotagmin-like protein 4 (SYTL4) (Homo sapiens (Human)).